We begin with the raw amino-acid sequence, 414 residues long: 3-oxoacyl-[acyl-carrier-protein] synthase 2 (414 aa).

In terms of domain architecture, Ketosynthase family 3 (KS3) spans 4–411; the sequence is NIRVVITGMG…GHNAVLVFKK (408 aa). Residues Cys-165, His-304, and His-341 each act as for beta-ketoacyl synthase activity in the active site.

This sequence belongs to the thiolase-like superfamily. Beta-ketoacyl-ACP synthases family.

The enzyme catalyses a fatty acyl-[ACP] + malonyl-[ACP] + H(+) = a 3-oxoacyl-[ACP] + holo-[ACP] + CO2. It carries out the reaction (9Z)-hexadecenoyl-[ACP] + malonyl-[ACP] + H(+) = 3-oxo-(11Z)-octadecenoyl-[ACP] + holo-[ACP] + CO2. Its pathway is lipid metabolism; fatty acid biosynthesis. Involved in the type II fatty acid elongation cycle. Catalyzes the elongation of a wide range of acyl-ACP by the addition of two carbons from malonyl-ACP to an acyl acceptor. Can efficiently catalyze the conversion of palmitoleoyl-ACP (cis-hexadec-9-enoyl-ACP) to cis-vaccenoyl-ACP (cis-octadec-11-enoyl-ACP), an essential step in the thermal regulation of fatty acid composition. This Staphylococcus aureus (strain MRSA252) protein is 3-oxoacyl-[acyl-carrier-protein] synthase 2 (fabF).